The primary structure comprises 388 residues: 1-deoxy-D-xylulose 5-phosphate reductoisomerase (388 aa).

NADPH-binding residues include T15, G16, S17, I18, and N127. K128 is a 1-deoxy-D-xylulose 5-phosphate binding site. E129 lines the NADPH pocket. D153 provides a ligand contact to Mn(2+). 1-deoxy-D-xylulose 5-phosphate-binding residues include S154, E155, S179, and H202. A Mn(2+)-binding site is contributed by E155. NADPH is bound at residue G208. 1-deoxy-D-xylulose 5-phosphate-binding residues include S215, N220, K221, and E224. E224 contacts Mn(2+).

The protein belongs to the DXR family. Mg(2+) serves as cofactor. Requires Mn(2+) as cofactor.

It carries out the reaction 2-C-methyl-D-erythritol 4-phosphate + NADP(+) = 1-deoxy-D-xylulose 5-phosphate + NADPH + H(+). It participates in isoprenoid biosynthesis; isopentenyl diphosphate biosynthesis via DXP pathway; isopentenyl diphosphate from 1-deoxy-D-xylulose 5-phosphate: step 1/6. In terms of biological role, catalyzes the NADPH-dependent rearrangement and reduction of 1-deoxy-D-xylulose-5-phosphate (DXP) to 2-C-methyl-D-erythritol 4-phosphate (MEP). The sequence is that of 1-deoxy-D-xylulose 5-phosphate reductoisomerase from Bacteroides fragilis (strain YCH46).